The chain runs to 444 residues: tRNA pseudouridine synthase Pus10 (444 aa).

Residue Asp265 is the Nucleophile of the active site. Tyr333 and Tyr405 together coordinate substrate.

The protein belongs to the pseudouridine synthase Pus10 family.

The enzyme catalyses uridine(54) in tRNA = pseudouridine(54) in tRNA. It catalyses the reaction uridine(55) in tRNA = pseudouridine(55) in tRNA. Functionally, responsible for synthesis of pseudouridine from uracil-54 and uracil-55 in the psi GC loop of transfer RNAs. This chain is tRNA pseudouridine synthase Pus10, found in Thermofilum pendens (strain DSM 2475 / Hrk 5).